The following is a 373-amino-acid chain: DNA replication and repair protein RecF (373 aa).

30–37 (GDNAQGKT) is a binding site for ATP.

It belongs to the RecF family.

It localises to the cytoplasm. Its function is as follows. The RecF protein is involved in DNA metabolism; it is required for DNA replication and normal SOS inducibility. RecF binds preferentially to single-stranded, linear DNA. It also seems to bind ATP. The chain is DNA replication and repair protein RecF from Oenococcus oeni (strain ATCC BAA-331 / PSU-1).